The chain runs to 765 residues: Palmitoyltransferase ZDHHC8 (765 aa).

Residues methionine 1 to lysine 13 lie on the Cytoplasmic side of the membrane. A helical membrane pass occupies residues tyrosine 14 to phenylalanine 34. Residues threonine 35–glycine 52 are Lumenal-facing. Residues isoleucine 53–phenylalanine 73 form a helical membrane-spanning segment. At proline 74–tyrosine 148 the chain is on the cytoplasmic side. A DHHC domain is found at lysine 104–leucine 154. Cysteine 134 functions as the S-palmitoyl cysteine intermediate in the catalytic mechanism. Residues phenylalanine 149–valine 169 traverse the membrane as a helical segment. The Lumenal segment spans residues tyrosine 170 to methionine 190. A helical transmembrane segment spans residues cysteine 191–valine 211. The Cytoplasmic portion of the chain corresponds to threonine 212–valine 765. Residues glycine 293–proline 352 are disordered. Residues glycine 301–leucine 311 show a composition bias toward basic and acidic residues. Serine 337 is subject to Phosphoserine. Arginine 441 carries the omega-N-methylarginine modification. Positions leucine 509–arginine 540 are disordered. Phosphoserine occurs at positions 606, 627, 675, 682, 725, and 743. Residues glycine 613–histidine 747 are disordered. The span at proline 622 to serine 653 shows a compositional bias: low complexity.

Belongs to the DHHC palmitoyltransferase family. ERF2/ZDHHC9 subfamily. Widely expressed.

The protein resides in the golgi apparatus membrane. Its subcellular location is the mitochondrion membrane. It catalyses the reaction L-cysteinyl-[protein] + hexadecanoyl-CoA = S-hexadecanoyl-L-cysteinyl-[protein] + CoA. Functionally, palmitoyltransferase that catalyzes the addition of palmitate onto various protein substrates and therefore functions in several unrelated biological processes. Through the palmitoylation of ABCA1 regulates the localization of the transporter to the plasma membrane and thereby regulates its function in cholesterol and phospholipid efflux. Could also pamitoylate the D(2) dopamine receptor DRD2 and regulate its stability and localization to the plasma membrane. Could also play a role in glutamatergic transmission. In terms of biological role, (Microbial infection) Able to palmitoylate SARS coronavirus-2/SARS-CoV-2 spike protein following its synthesis in the endoplasmic reticulum (ER). In the infected cell, promotes spike biogenesis by protecting it from premature ER degradation, increases half-life and controls the lipid organization of its immediate membrane environment. Once the virus has formed, spike palmitoylation controls fusion with the target cell. The polypeptide is Palmitoyltransferase ZDHHC8 (Homo sapiens (Human)).